The following is a 147-amino-acid chain: uncharacterized protein (147 aa).

This is an uncharacterized protein from Schizosaccharomyces pombe (strain 972 / ATCC 24843) (Fission yeast).